The primary structure comprises 200 residues: GTP cyclohydrolase 1 (200 aa).

Zn(2+)-binding residues include C87, H90, and C158.

The protein belongs to the GTP cyclohydrolase I family. As to quaternary structure, toroid-shaped homodecamer, composed of two pentamers of five dimers.

It catalyses the reaction GTP + H2O = 7,8-dihydroneopterin 3'-triphosphate + formate + H(+). It functions in the pathway cofactor biosynthesis; 7,8-dihydroneopterin triphosphate biosynthesis; 7,8-dihydroneopterin triphosphate from GTP: step 1/1. This chain is GTP cyclohydrolase 1, found in Xanthomonas campestris pv. campestris (strain ATCC 33913 / DSM 3586 / NCPPB 528 / LMG 568 / P 25).